Here is a 385-residue protein sequence, read N- to C-terminus: MIKNYWKKFWKNSTTKSQNFIELNDIAYGNLKRVKVGIEAYRENVIVYRCINLIAQSAGHVPWKVLKSRTGEVISELPVHYLLKRPNPEKAGVDFFSELIASKLLFGNSYILSTLDSYPKEIYLLPALATELVIEHDNLVAYRYKSSKGDRIYKIDHIAKMSRVLHLKNYHPLDQHYGLSCLEAASLPIDLHQQSFYWNHSLLQNGARPSGALIVKDSNGYLSDEQFERLQAQLSEKFSGNSNAGKPLLLEEGLGWQEMSINPKDMDFIESKNSAAREIALAFGVPPQLLGINGDNTYSNMQEARLALWEETLIPLLDKIADSVSNWFSYLFKEDIIIDFDRDSISALTEKRENLWAKISNANFMTLNEKRAFVGLPPIINGDRL.

Belongs to the phage portal family. HK97 subfamily.

This is an uncharacterized protein from Rickettsia felis (strain ATCC VR-1525 / URRWXCal2) (Rickettsia azadi).